We begin with the raw amino-acid sequence, 100 residues long: MMLSPREQEKLLIVVAANLARSRKERGLKLNYPEAISMIAFEILEGARDGKSVSELMQAGREVLTVDDVMDGIADMIHDVQVEATFPDGTKLVTVHQPIK.

Belongs to the urease gamma subunit family. Heterotrimer of UreA (gamma), UreB (beta) and UreC (alpha) subunits. Three heterotrimers associate to form the active enzyme.

The protein resides in the cytoplasm. It catalyses the reaction urea + 2 H2O + H(+) = hydrogencarbonate + 2 NH4(+). It functions in the pathway nitrogen metabolism; urea degradation; CO(2) and NH(3) from urea (urease route): step 1/1. The protein is Urease subunit gamma of Lachnoclostridium phytofermentans (strain ATCC 700394 / DSM 18823 / ISDg) (Clostridium phytofermentans).